The primary structure comprises 427 residues: Ribitol transporter (427 aa).

Residues 1–7 (MSVNNKQ) lie on the Cytoplasmic side of the membrane. Residues 8–28 (WYGLPLNLIWGYVAIAVFMTG) form a helical membrane-spanning segment. Over 29–51 (DGFELAFLSHYIKALGFTPAQAS) the chain is Extracellular. A helical transmembrane segment spans residues 52–72 (FAFTLYGLAAALSAWVSGVVA). The Cytoplasmic segment spans residues 73–79 (EIITPRK). A helical transmembrane segment spans residues 80-100 (AMLIGFVLWCVFHVLFLVFGL). At 101–107 (GRANYAL) the chain is on the extracellular side. Residues 108–128 (ILLFYGIRGLAYPLFLYSFIV) form a helical membrane-spanning segment. The Cytoplasmic portion of the chain corresponds to 129 to 141 (AIIHNVRSDSSSS). The chain crosses the membrane as a helical span at residues 142 to 162 (ALGWFWAVYSVGIGVFGSYIP). Residues 163–171 (SFTIPHIGE) lie on the Extracellular side of the membrane. The chain crosses the membrane as a helical span at residues 172–192 (MGTLWLALLFCATGGIIALVS). The Cytoplasmic segment spans residues 193-238 (MRHTETPRHMQNLTTREKFAELGRAATLLYTNRSILFSSIVRIINT). Residues 239 to 259 (LSLFGFAVIMPMMFVDELGFT) traverse the membrane as a helical segment. Residues 260 to 263 (TSEW) lie on the Extracellular side of the membrane. The helical transmembrane segment at 264–284 (LQVWAAFFFTTIFSNVFWGIV) threads the bilayer. The Cytoplasmic portion of the chain corresponds to 285 to 295 (AEKMGWMKVIR). Residues 296–316 (WFGCIGMALSSLAFYYLPQHF) traverse the membrane as a helical segment. Topologically, residues 317–323 (GHNFAMA) are extracellular. The helical transmembrane segment at 324 to 344 (LVPAIALGIFVAAFVPMAAVF) threads the bilayer. At 345–360 (PALEPNHKGAAISVYN) the chain is on the cytoplasmic side. The helical transmembrane segment at 361–381 (LSAGLSNFLAPAIAVVLLPYF) threads the bilayer. Residues 382 to 383 (ST) lie on the Extracellular side of the membrane. A helical membrane pass occupies residues 384–404 (IGVVIAYTALYILAFFLCPLI). At 405-427 (RVEQPGFTSDQHAKPFTANAAES) the chain is on the cytoplasmic side.

The protein belongs to the major facilitator superfamily. Sugar transporter (TC 2.A.1.1) family. CsbX subfamily.

Its subcellular location is the cell membrane. In Klebsiella pneumoniae, this protein is Ribitol transporter (rbtT).